The following is a 317-amino-acid chain: Orange carotenoid-binding protein (317 aa).

An OCP N-terminal domain is found at 18-169 (ADVVPATIAR…DMGFTAGKDG (152 aa)). Echinenone contacts are provided by residues 34 to 38 (EDQLA), 37 to 44 (LALIWFAY), 80 to 83 (TQAM), 107 to 117 (LGFWYRLGELM), 125 to 129 (IPAGY), 151 to 161 (ITVLRNAVVDM), Tyr201, 245 to 250 (CQNLKL), 273 to 284 (VQTPWFGGNVGM), and Trp288.

This sequence belongs to the orange carotenoid-binding protein family. Monomer. Interacts with the APC core of the phycobilisome (PB), probably at a ratio of 1:1 in a light-independent manner; possibly only OCP-R binds to PBs. Interacts with FRP. Detachment from PBs is accelerated by FPR. The cofactor is 3'-hydroxyechinenone. In terms of processing, proteolytically cleaved into a red 16.7 kDa form named red carotenoid-binding protein (RCP) which lacks 15 residues from the N-terminus and approximately 150 residues from the C-terminus.

It is found in the cellular thylakoid membrane. In terms of biological role, acts as a blue-light photoreceptor and photo-protectant. Essential for inhibiting damaged induced by excess blue-green light via a process known as non-photochemical quenching (NPQ). In the dark or dim light the stable inactive form (OCP-O) is orange, upon illumination with blue-green light it converts to a metastable active red form (OCP-R), inducing energy dissipation, quenching cellular fluorescence via NPQ. One OCP-R molecule is sufficient to quench 1 phycobilisome. More OCP-R accumulates under high-light and low temperature; in the dark OCP-R spontaneously reverts to OCP-O. Reversion of OCP-O is accelerated by FRP. A kinetic study suggests conversion of OCP-O to OCP-R is limited by cis-trans proline isomerization of either Gln224-Pro225 or Pro225-Pro226. The chain is Orange carotenoid-binding protein from Synechocystis sp. (strain ATCC 27184 / PCC 6803 / Kazusa).